Consider the following 472-residue polypeptide: MVIANSVKTSTPKFIISDISLSDFGRKEIKIAETEMPGLMALRDKYQSEKPLKGAKIAGSLHMTIQTAVLIETLVDLGAEVKWASCNIFSTQDHAAAAIADQGISVFAKKGETLDEYWQYTHYILDWGSDFPNMILDDGGDATGLLILGSKAEKDLSVLDNPSNEEEIALFNSIKSKLKNDGEFYSRIKSNIIGVTEETTTGVARLYQLQKQNALPFPAINVNDSVTKSKFDNLYGCRESLVDSIKRATDVMIAGKTALVMGFGDVGKGSAQSLRGLGAIVKVAEIDPICALQAAMEGYSVVRLEDVVEDIDIFVTATGNYQVITHENLVKMKDEAIVCNIGHFDNEIDVASLKNYQWENIKPQVDHITLPSGNKIILLAEGRLVNLGCATGHPSFVMSNSFTNQVLAQIELFNKSEQYAKEVYVLPKHLDEMVARLHLDKIGAKLTKLTKEQADYISVSVEGPYKSEFYRY.

Residues T64, D138, and E198 each coordinate substrate. An NAD(+)-binding site is contributed by 199-201 (TTT). Substrate-binding residues include K228 and D232. Residues N233, 262-267 (GFGDVG), E285, N320, 341-343 (IGH), and N386 each bind NAD(+).

This sequence belongs to the adenosylhomocysteinase family. NAD(+) serves as cofactor.

The protein resides in the cytoplasm. It catalyses the reaction S-adenosyl-L-homocysteine + H2O = L-homocysteine + adenosine. Its pathway is amino-acid biosynthesis; L-homocysteine biosynthesis; L-homocysteine from S-adenosyl-L-homocysteine: step 1/1. Functionally, may play a key role in the regulation of the intracellular concentration of adenosylhomocysteine. The chain is Adenosylhomocysteinase from Prochlorococcus marinus (strain MIT 9301).